The primary structure comprises 784 residues: LPS-assembly protein LptD (784 aa).

The N-terminal stretch at 1-24 (MKKRIPTLLATMIASALYSHQGLA) is a signal peptide. Cystine bridges form between Cys-31–Cys-724 and Cys-173–Cys-725.

This sequence belongs to the LptD family. In terms of assembly, component of the lipopolysaccharide transport and assembly complex. Interacts with LptE and LptA. Contains two intramolecular disulfide bonds.

Its subcellular location is the cell outer membrane. Its function is as follows. Together with LptE, is involved in the assembly of lipopolysaccharide (LPS) at the surface of the outer membrane. The protein is LPS-assembly protein LptD of Salmonella typhi.